The sequence spans 184 residues: Probable gluconokinase (184 aa).

An ATP-binding site is contributed by 11–18 (GVSGSGKS).

The protein belongs to the gluconokinase GntK/GntV family.

It carries out the reaction D-gluconate + ATP = 6-phospho-D-gluconate + ADP + H(+). Its pathway is carbohydrate acid metabolism; D-gluconate degradation. In Mus musculus (Mouse), this protein is Probable gluconokinase (Idnk).